The following is a 222-amino-acid chain: Phosphoglycolate phosphatase (222 aa).

Residue Asp8 is the Nucleophile of the active site. Residues Asp8 and Asp10 each contribute to the Mg(2+) site. Lys146 provides a ligand contact to substrate. 2 residues coordinate Mg(2+): Asp169 and Asp173.

Belongs to the archaeal SPP-like hydrolase family. Mg(2+) is required as a cofactor.

The enzyme catalyses 2-phosphoglycolate + H2O = glycolate + phosphate. Catalyzes the dephosphorylation of 2-phosphoglycolate. The polypeptide is Phosphoglycolate phosphatase (Methanothrix thermoacetophila (strain DSM 6194 / JCM 14653 / NBRC 101360 / PT) (Methanosaeta thermophila)).